We begin with the raw amino-acid sequence, 63 residues long: Large ribosomal subunit protein bL28 (63 aa).

This sequence belongs to the bacterial ribosomal protein bL28 family.

This Clostridium kluyveri (strain NBRC 12016) protein is Large ribosomal subunit protein bL28.